The primary structure comprises 156 residues: Putative pre-16S rRNA nuclease (156 aa).

Belongs to the YqgF nuclease family.

It is found in the cytoplasm. Functionally, could be a nuclease involved in processing of the 5'-end of pre-16S rRNA. The sequence is that of Putative pre-16S rRNA nuclease from Aromatoleum aromaticum (strain DSM 19018 / LMG 30748 / EbN1) (Azoarcus sp. (strain EbN1)).